Here is a 1197-residue protein sequence, read N- to C-terminus: PAN2-PAN3 deadenylation complex catalytic subunit PAN2 (1197 aa).

WD repeat units follow at residues 153–193 (DEAE…QKYT), 195–231 (EVPG…VEHE), 244–280 (VHGN…ATTP), and 328–367 (TVGP…TFNT). The interval 368–485 (YSRETDFALP…IGREEEPHLY (118 aa)) is linker. The USP domain occupies 486 to 919 (MVAKKYRKVT…VPAILYYARR (434 aa)). Residues 970–1142 (VGLDAEFVTL…EDARTALQLY (173 aa)) enclose the Exonuclease domain. Positions 973, 975, 1082, and 1134 each coordinate a divalent metal cation. Positions 1176 to 1197 (VPEPDSQSSPKHGAVFPPVLAL) are disordered.

It belongs to the peptidase C19 family. PAN2 subfamily. As to quaternary structure, forms a heterotrimer with an asymmetric homodimer of the regulatory subunit PAN3 to form the poly(A)-nuclease (PAN) deadenylation complex. A divalent metal cation is required as a cofactor.

The protein resides in the cytoplasm. It is found in the P-body. Its subcellular location is the nucleus. It catalyses the reaction Exonucleolytic cleavage of poly(A) to 5'-AMP.. Positively regulated by the regulatory subunit PAN3. In terms of biological role, catalytic subunit of the poly(A)-nuclease (PAN) deadenylation complex, one of two cytoplasmic mRNA deadenylases involved in general and miRNA-mediated mRNA turnover. PAN specifically shortens poly(A) tails of RNA and the activity is stimulated by poly(A)-binding protein (PABP). PAN deadenylation is followed by rapid degradation of the shortened mRNA tails by the CCR4-NOT complex. Deadenylated mRNAs are then degraded by two alternative mechanisms, namely exosome-mediated 3'-5' exonucleolytic degradation, or deadenylation-dependent mRNA decaping and subsequent 5'-3' exonucleolytic degradation by XRN1. The chain is PAN2-PAN3 deadenylation complex catalytic subunit PAN2 from Gallus gallus (Chicken).